The following is a 350-amino-acid chain: Probable transposase-like protein At4g04430 (350 aa).

Disordered stretches follow at residues 1–57 (MPSD…PSVN) and 307–328 (QIGQ…QVAN). Positions 30 to 43 (SGVQGSGSRSGSTV) are enriched in low complexity.

It belongs to the transposase 24 family.

This chain is Probable transposase-like protein At4g04430, found in Arabidopsis thaliana (Mouse-ear cress).